The following is a 156-amino-acid chain: Ribosomal RNA large subunit methyltransferase H (156 aa).

Residues Leu-74, Gly-105, and 124–129 (LSKLTL) contribute to the S-adenosyl-L-methionine site.

The protein belongs to the RNA methyltransferase RlmH family. Homodimer.

It is found in the cytoplasm. The enzyme catalyses pseudouridine(1915) in 23S rRNA + S-adenosyl-L-methionine = N(3)-methylpseudouridine(1915) in 23S rRNA + S-adenosyl-L-homocysteine + H(+). In terms of biological role, specifically methylates the pseudouridine at position 1915 (m3Psi1915) in 23S rRNA. This chain is Ribosomal RNA large subunit methyltransferase H, found in Legionella pneumophila (strain Lens).